We begin with the raw amino-acid sequence, 1174 residues long: Probable DNA-directed RNA polymerase I subunit RPA2 (1174 aa).

Basic and acidic residues predominate over residues 1 to 16; the sequence is MSFQTLERERTFKNPP. A disordered region spans residues 1–23; that stretch reads MSFQTLERERTFKNPPKDGTSFP. Residues 1089 to 1118 form a C4-type zinc finger; it reads CRDCGSIISIMSTISMNGVGSASEVRCRSC.

It belongs to the RNA polymerase beta chain family. In terms of assembly, component of the RNA polymerase I (Pol I) complex consisting of 14 subunits.

Its subcellular location is the nucleus. The protein localises to the nucleolus. The catalysed reaction is RNA(n) + a ribonucleoside 5'-triphosphate = RNA(n+1) + diphosphate. Its function is as follows. DNA-dependent RNA polymerase catalyzes the transcription of DNA into RNA using the four ribonucleoside triphosphates as substrates. Second largest core component of RNA polymerase I which synthesizes ribosomal RNA precursors. Proposed to contribute to the polymerase catalytic activity and forms the polymerase active center together with the largest subunit. Pol I is composed of mobile elements and RPA2 is part of the core element with the central large cleft and probably a clamp element that moves to open and close the cleft. In Schizosaccharomyces pombe (strain 972 / ATCC 24843) (Fission yeast), this protein is Probable DNA-directed RNA polymerase I subunit RPA2 (rpa2).